Reading from the N-terminus, the 339-residue chain is UDP-N-acetylenolpyruvoylglucosamine reductase (339 aa).

The region spanning 19-189 is the FAD-binding PCMH-type domain; sequence VDVQARLFAE…LRVRFKLSRV (171 aa). Arg-166 is a catalytic residue. Ser-239 functions as the Proton donor in the catalytic mechanism. Glu-335 is an active-site residue.

Belongs to the MurB family. FAD serves as cofactor.

It localises to the cytoplasm. It carries out the reaction UDP-N-acetyl-alpha-D-muramate + NADP(+) = UDP-N-acetyl-3-O-(1-carboxyvinyl)-alpha-D-glucosamine + NADPH + H(+). It functions in the pathway cell wall biogenesis; peptidoglycan biosynthesis. Cell wall formation. This chain is UDP-N-acetylenolpyruvoylglucosamine reductase, found in Pseudomonas syringae pv. syringae (strain B728a).